The chain runs to 584 residues: Arginine--tRNA ligase (584 aa).

The 'HIGH' region motif lies at 126 to 136 (PNIAKEMHVGH).

This sequence belongs to the class-I aminoacyl-tRNA synthetase family. As to quaternary structure, monomer.

Its subcellular location is the cytoplasm. The enzyme catalyses tRNA(Arg) + L-arginine + ATP = L-arginyl-tRNA(Arg) + AMP + diphosphate. The sequence is that of Arginine--tRNA ligase (argS) from Synechocystis sp. (strain ATCC 27184 / PCC 6803 / Kazusa).